Reading from the N-terminus, the 321-residue chain is GDP-L-fucose synthase (321 aa).

Residues 10 to 16 (GHRGMVG), 36 to 41 (RDELNL), and 105 to 108 (LGSS) each bind NADP(+). The active-site Proton donor/acceptor is the Y136. NADP(+) is bound by residues K140, 163-166 (PTNL), and H179. Substrate-binding residues include R187, W202, R209, and D278.

Belongs to the NAD(P)-dependent epimerase/dehydratase family. Fucose synthase subfamily. As to quaternary structure, homodimer.

The protein resides in the cytoplasm. It carries out the reaction GDP-beta-L-fucose + NADP(+) = GDP-4-dehydro-alpha-D-rhamnose + NADPH + H(+). Its pathway is nucleotide-sugar biosynthesis; GDP-L-fucose biosynthesis via de novo pathway; GDP-L-fucose from GDP-alpha-D-mannose: step 2/2. It functions in the pathway exopolysaccharide biosynthesis; colanic acid biosynthesis. Its activity is regulated as follows. Subject to product inhibition by NADP and GDP-fucose. In terms of biological role, catalyzes the two-step NADP-dependent conversion of GDP-4-dehydro-6-deoxy-D-mannose to GDP-fucose, involving an epimerase and a reductase reaction. The sequence is that of GDP-L-fucose synthase from Escherichia coli (strain K12).